We begin with the raw amino-acid sequence, 1475 residues long: MAVRPTRRCLLALLLCFAWWAMAVVASKQGAGCPSRCLCFRTTVRCMHLLLEAVPAVAPQTSILDLRFNRIREIQPGAFRRLRSLNTLLLNNNQIKKIPNGAFEDLENLKYLYLYKNEIQSIDRQAFKGLASLEQLYLHFNQIETLDPESFQHLPKLERLFLHNNRITHLVPGTFSQLESMKRLRLDSNALHCDCEILWLADLLKTYAQSGNAQAAATCEYPRRIQGRSVATITPEELNCERPRITSEPQDADVTSGNTVYFTCRAEGNPKPEIIWLRNNNELSMKTDSRLNLLDDGTLMIQNTQEADEGVYQCMAKNVAGEAKTQEVTLRYLGSPARPTFVIQPQNTEVLVGESVTLECSATGHPLPQITWTRGDRTPLPIDPRVNITPSGGLYIQNVAQSDSGEYTCFASNSVDSIHATAFIIVQALPQFTVTPQSRVVIEGQTVDFQCAAKGHPQPVIAWTKGGSQLSVDRRHLVLSSGTLRISGVALHDQGQYECQAVNIIGSQKVVAHLTVQPRVTPVFASIPSDMTVEVGTNVQLPCSSQGEPEPAITWNKDGVQVTESGKFHISPEGFLTINDVGTADAGRYECVARNTIGYASVSMVLSVNVPDVSRNGDPYVATSIVEAIATVDRAINSTRTHLFDSRPRSPNDLLALFRYPRDPYTVGQARAGEIFERTLQLIQEHVQHGLMVDLNGTSYHYNDLVSPQYLSLIANLSGCTAHRRVNNCSDMCFHQKYRTHDGTCNNLQHPMWGASLTAFERLLKAVYENGFNTPRGINSQRQYNGHVLPMPRLVSTTLIGTEVITPDEQFTHMLMQWGQFLDHDLDSTVVALSQARFSDGQHCSSVCSNDPPCFSVMIPPNDPRVRSGARCMFFVRSSPVCGSGMTSLLMNSVYPREQINQLTSYIDASNVYGSTDHEARSIRDLASHRGLLRQGIVQRSGKPLLPFATGPPTECMRDENESPIPCFLAGDHRANEQLGLTSMHTLWFREHNRIAAELLKLNPHWDGDTVYHETRKIVGAEIQHITYRHWLPKILGEVGMKMLGEYRGYDPSVNAGIFNAFATAAFRFGHTLINPLLYRLDENFEPIPQGHVPLHKAFFSPFRIVNEGGIDPLLRGLFGVAGKMRIPSQLLNTELTERLFSMAHTVALDLAAINIQRGRDHGIPPYHDYRVYCNLSAAYTFEDLKNEIKSPVIREKLQRLYGSTLNIDLFPALMVEDLVPGSRLGPTLMCLLSTQFRRLRDGDRLWYENPGVFSPAQLTQLKQTSLARILCDNSDNITRVQQDVFRVAEFPHGYSSCEDIPRVDLRVWQDCCEDCRTRGQFNAFSYHFRGRRSLEFSYEDDKPTKRARWRKALSVKHGKHLSNATSATHEHLEGPATNDLKEFVLEMQKIITDLRKQINSLESRLSTTECVDDSGESHGGNTKWKKDPCTVCECKNGQITCFVEACQPAACPQPVKVEGACCPVCLKNTAEEKP.

The first 23 residues, 1-23 (MAVRPTRRCLLALLLCFAWWAMA), serve as a signal peptide directing secretion. Residues 24–60 (VVASKQGAGCPSRCLCFRTTVRCMHLLLEAVPAVAPQ) enclose the LRRNT domain. 2 cysteine pairs are disulfide-bonded: Cys33–Cys39 and Cys37–Cys46. LRR repeat units lie at residues 58-81 (APQT…AFRR), 82-105 (LRSL…AFED), 107-129 (ENLK…AFKG), 130-153 (LASL…SFQH), 154-177 (LPKL…TFSQ), and 179-201 (ESMK…LWLA). The region spanning 189–241 (NALHCDCEILWLADLLKTYAQSGNAQAAATCEYPRRIQGRSVATITPEELNCE) is the LRRCT domain. Cystine bridges form between Cys193–Cys240, Cys195–Cys219, Cys264–Cys314, Cys360–Cys409, Cys451–Cys499, and Cys543–Cys591. 4 Ig-like C2-type domains span residues 243-329 (PRIT…QEVT), 339-425 (PTFV…AFII), 430-517 (PQFT…LTVQ), and 518-607 (PRVT…MVLS). Asn387 carries an N-linked (GlcNAc...) asparagine glycan. The stretch at 402-425 (SDSGEYTCFASNSVDSIHATAFII) is one LRR 7 repeat. 4 N-linked (GlcNAc...) asparagine glycosylation sites follow: Asn637, Asn696, Asn716, and Asn728. 4 disulfides stabilise this stretch: Cys720-Cys882, Cys729-Cys745, Cys844-Cys854, and Cys848-Cys872. Residue Asp823 coordinates heme b. Catalysis depends on His824, which acts as the Proton acceptor. Asp825 is a Ca(2+) binding site. Thr904, Tyr906, Asp908, and Ser910 together coordinate Ca(2+). Cys956 and Cys967 are disulfide-bonded. The N-linked (GlcNAc...) asparagine glycan is linked to Asn961. The heme b site is built by Glu977 and His1071. The stretch at 1148 to 1172 (ALDLAAINIQRGRDHGIPPYHDYRV) is one LRR 8 repeat. Tyr1173 bears the Phosphotyrosine mark. 2 disulfide bridges follow: Cys1174-Cys1231 and Cys1272-Cys1298. The N-linked (GlcNAc...) asparagine glycan is linked to Asn1175. Ser1177 carries the post-translational modification Phosphoserine. The stretch at 1267–1288 (LARILCDNSDNITRVQQDVFRV) is one LRR 9 repeat. Asn1277 and Asn1364 each carry an N-linked (GlcNAc...) asparagine glycan. A required in homotrimerization region spans residues 1312–1407 (CCEDCRTRGQ…QINSLESRLS (96 aa)). Residues 1409–1467 (TECVDDSGESHGGNTKWKKDPCTVCECKNGQITCFVEACQPAACPQPVKVEGACCPVCL) form the VWFC domain.

It belongs to the peroxidase family. XPO subfamily. As to quaternary structure, homotrimer; disulfide-linked. The homotrimer form is predominant. Homooligomer; disulfide-linked. Oligomerization occurs intracellularly before C-terminal proteolytic cleavage. Interacts with PXDNL; this interaction inhibits the peroxidase activity of PXDN. Ca(2+) serves as cofactor. Heme b is required as a cofactor. In terms of processing, processed by FURIN and the proteolytic processing largely depends on the peroxidase activity of PXDN. The proteolytic cleavage occurs after intracellular homotrimerization and releases into the extracellular matrix a large, catalytically active fragment and a smaller fragment consisting primarily of the C-terminal VWFC domain. The processing enhances both peroxidase activity and sulfilimine cross-links formation. As to expression, highly expressed in the cardiovascular system. In the embryo, expressed in the corneal epithelial layer. In the adult eyes, expressed in the corneal and lens epithelium. Expressed in lung.

The protein resides in the secreted. Its subcellular location is the extracellular space. It is found in the extracellular matrix. The protein localises to the endoplasmic reticulum. It localises to the cell surface. The protein resides in the basement membrane. The catalysed reaction is L-lysyl-[collagen] + L-methionyl-[collagen] + H2O2 = [collagen]-L-lysyl-N-S-L-methionyl-[collagen] + 2 H2O + H(+). It carries out the reaction bromide + H2O2 = hypobromite + H2O. The enzyme catalyses L-lysyl-[collagen] + L-methionyl-[collagen] + hypobromite = [collagen]-L-lysyl-N-S-L-methionyl-[collagen] + bromide + H2O + H(+). It catalyses the reaction (5R)-5-hydroxy-L-lysyl-[collagen] + L-methionyl-[collagen] + hypobromite = [collagen]-(5R)-5-hydroxy-L-lysyl-N-S-L-methionyl-[collagen] + bromide + H2O + H(+). The catalysed reaction is (5R)-5-hydroxy-L-lysyl-[collagen] + L-methionyl-[collagen] + H2O2 = [collagen]-(5R)-5-hydroxy-L-lysyl-N-S-L-methionyl-[collagen] + 2 H2O + H(+). It carries out the reaction L-tyrosyl-[protein] + bromide + H2O2 + H(+) = 3-bromo-L-tyrosyl-[protein] + 2 H2O. The enzyme catalyses hypobromite + L-tyrosyl-[protein] + H(+) = 3-bromo-L-tyrosyl-[protein] + H2O. Its activity is regulated as follows. Thiocyanate inhibits the formation of 3-bromotyrosine. In terms of biological role, catalyzes the two-electron oxidation of bromide by hydrogen peroxide and generates hypobromite as a reactive intermediate which mediates the formation of sulfilimine cross-links between methionine and hydroxylysine residues within an uncross-linked collagen IV/COL4A1 NC1 hexamer. In turns, directly contributes to the collagen IV network-dependent fibronectin/FN and laminin assembly, which is required for full extracellular matrix (ECM)-mediated signaling. Thus, sulfilimine cross-links are essential for growth factor-induced cell proliferation and survival in endothelial cells, an event essential to basement membrane integrity. In addition, through the bromide oxidation, may promote tubulogenesis and induce angiogenesis through ERK1/2, Akt, and FAK pathways. Moreover brominates alpha2 collagen IV chain/COL4A2 at 'Tyr-1480' and leads to bromine enrichment of the basement membranes. In vitro, can also catalyze the two-electron oxidation of thiocyanate and iodide and these two substrates could effectively compete with bromide and thus inhibit the formation of sulfilimine bonds. Binds laminins. May play a role in the organization of eyeball structure and lens development during eye development. The chain is Peroxidasin homolog from Mus musculus (Mouse).